Reading from the N-terminus, the 733-residue chain is LMBR1 domain-containing protein 2 homolog A (733 aa).

A run of 5 helical transmembrane segments spans residues 1-21, 33-53, 125-145, 163-183, and 191-211; these read MIVI…KILH, VYIS…LVPI, FYFG…SFVL, AYLY…LLAV, and MVGF…IILM. Residues 232–266 adopt a coiled-coil conformation; that stretch reads LKHLQFKAVELLNSKKKANEELIATMKVIRRIQEK. 4 consecutive transmembrane segments (helical) span residues 386-406, 423-443, 468-488, and 513-533; these read AAIV…ALAF, VSNI…ALTC, SIIF…YNFI, and VAPF…VIVC. Disordered stretches follow at residues 581–641, 649–668, and 674–696; these read NNIK…TSSA, LKKS…PYEQ, and ESND…TYNA. Positions 596–619 are enriched in polar residues; the sequence is DSTSNNPKQIFKSGSTTISKQSPP. 2 stretches are compositionally biased toward low complexity: residues 620 to 640 and 654 to 664; these read NLNV…NTSS and NNNNNNNNNNN. The segment covering 674–685 has biased composition (acidic residues); sequence ESNDFDDDDDIE.

Belongs to the LIMR family.

Its subcellular location is the membrane. In Dictyostelium discoideum (Social amoeba), this protein is LMBR1 domain-containing protein 2 homolog A.